The chain runs to 144 residues: D-aminoacyl-tRNA deacylase (144 aa).

The Gly-cisPro motif, important for rejection of L-amino acids signature appears at 136–137; that stretch reads GP.

This sequence belongs to the DTD family. Homodimer.

It localises to the cytoplasm. It carries out the reaction glycyl-tRNA(Ala) + H2O = tRNA(Ala) + glycine + H(+). It catalyses the reaction a D-aminoacyl-tRNA + H2O = a tRNA + a D-alpha-amino acid + H(+). Its function is as follows. An aminoacyl-tRNA editing enzyme that deacylates mischarged D-aminoacyl-tRNAs. Also deacylates mischarged glycyl-tRNA(Ala), protecting cells against glycine mischarging by AlaRS. Acts via tRNA-based rather than protein-based catalysis; rejects L-amino acids rather than detecting D-amino acids in the active site. By recycling D-aminoacyl-tRNA to D-amino acids and free tRNA molecules, this enzyme counteracts the toxicity associated with the formation of D-aminoacyl-tRNA entities in vivo and helps enforce protein L-homochirality. The protein is D-aminoacyl-tRNA deacylase of Aliivibrio fischeri (strain MJ11) (Vibrio fischeri).